A 790-amino-acid chain; its full sequence is Threonine--tRNA ligase 2, cytoplasmic (790 aa).

Residue alanine 2 is modified to N-acetylalanine. Residues 13–68 adopt a coiled-coil conformation; it reads SRLQRQEEDIRWLCAEVQRLRDEQLRGPERGQAEGPRLTREVAQLQAENRDLHQRL. The segment at 80 to 117 is disordered; that stretch reads RTEAGRAAAHEPPTQNQEKDTKKKRLKQSEPGREVKQP. A compositionally biased stretch (basic and acidic residues) spans 96–117; sequence QEKDTKKKRLKQSEPGREVKQP. One can recognise a TGS domain in the interval 148-210; it reads NVISVRVAGG…EGDSTVELLM (63 aa). Serine 441 carries the phosphoserine modification. A Nuclear localization signal motif is present at residues 774 to 780; it reads KLKNLKK.

It belongs to the class-II aminoacyl-tRNA synthetase family. In terms of assembly, may be a component of the multisynthetase complex (MSC), a large multi-subunit complex which contains at least eight different aminoacyl-tRNA synthetases plus three auxillary subunits AIMP1, AIMP2 and EEF1E1. Interacts with the MSC components EPRS1, AIMP1, AIMP2 and KARS1. In terms of tissue distribution, ubiquitous (at protein level). Strongly expressed in muscle (at protein level). Moderately expressed in heart and liver (at protein level). Weakly expressed in stomach, kidney, testis, spleen, brain, fat and lung (at protein level).

It is found in the cytoplasm. The protein resides in the nucleus. The enzyme catalyses tRNA(Thr) + L-threonine + ATP = L-threonyl-tRNA(Thr) + AMP + diphosphate + H(+). Its function is as follows. Catalyzes the attachment of threonine to tRNA(Thr) in a two-step reaction: threonine is first activated by ATP to form Thr-AMP and then transferred to the acceptor end of tRNA(Thr). Also edits incorrectly charged tRNA(Thr) via its editing domain, at the post-transfer stage. In Mus musculus (Mouse), this protein is Threonine--tRNA ligase 2, cytoplasmic (Tars3).